A 1118-amino-acid polypeptide reads, in one-letter code: uncharacterized protein (1118 aa).

3 disordered regions span residues 1–69 (MESG…NGED), 1044–1071 (PKSV…EKID), and 1090–1118 (IRPT…SFEL). Over residues 13 to 34 (DMVEEDNDEDSFEEPACEDSFD) the composition is skewed to acidic residues. The span at 35–60 (SQEASSKANEPQNDSFDEPIQSSVSK) shows a compositional bias: polar residues. Over residues 1107 to 1118 (EDSDDLEDSFEL) the composition is skewed to acidic residues.

This is an uncharacterized protein from Caenorhabditis elegans.